Consider the following 318-residue polypeptide: Olfactory receptor 2T3 (318 aa).

Topologically, residues 1 to 30 (MCSGNQTSQNQTASTDFTLTGLFAESKHAA) are extracellular. N-linked (GlcNAc...) asparagine glycans are attached at residues Asn5 and Asn10. The chain crosses the membrane as a helical span at residues 31–54 (LLYTVTFLLFLMALTGNALLILLI). Topologically, residues 55-62 (HSEPRLHT) are cytoplasmic. Residues 63–84 (PMYFFISQLALMDLMYLCVTVP) traverse the membrane as a helical segment. At 85-105 (KMLVGQVTGDDTISPSGCGIQ) the chain is on the extracellular side. An intrachain disulfide couples Cys102 to Cys194. The chain crosses the membrane as a helical span at residues 106–125 (MFFYLTLAGAEVFLLAAMAY). Residues 126-144 (DRYAAVCRPLHYPLLMNQR) lie on the Cytoplasmic side of the membrane. A helical transmembrane segment spans residues 145-163 (VCQLLVSACWVLGMVDGLL). Over 164 to 200 (LTPITMSFPFCQSRKILSFFCETPALLKLSCSDVSLY) the chain is Extracellular. The helical transmembrane segment at 201–224 (KTLMYLCCILMLLAPIMVISSSYT) threads the bilayer. Residues 225 to 241 (LILHLIHRMNSAAGHRK) lie on the Cytoplasmic side of the membrane. A helical transmembrane segment spans residues 242 to 264 (ALATCSSHMIIVLLLFGASFYTY). At 265–277 (MLPSSYHTAEQDM) the chain is on the extracellular side. A helical transmembrane segment spans residues 278–297 (MVSAFYTIFTPVLNPLIYSL). Over 298-318 (RNKDVTRALRSMMQSRMNQEK) the chain is Cytoplasmic.

This sequence belongs to the G-protein coupled receptor 1 family.

It localises to the cell membrane. In terms of biological role, odorant receptor. This chain is Olfactory receptor 2T3 (OR2T3), found in Homo sapiens (Human).